The sequence spans 436 residues: Transcriptional regulator STP3 (436 aa).

The interval 204–277 (EPLDDEFVPP…TKRKYTKKKQ (74 aa)) is disordered. Positions 230 to 265 (ISPPASSDSSSSSSYVPQLIPSSSSSVTSNGDSPVS) are enriched in low complexity. The segment covering 268–277 (TKRKYTKKKQ) has biased composition (basic residues). A C2H2-type zinc finger spans residues 315–337 (FDCPSCDASFKVKGYLTRHLKKH).

Post-translationally, activated by the amino acid-induced proteolytic removal of an N-terminal inhibitory domain.

Its subcellular location is the cell membrane. It is found in the nucleus. Its function is as follows. Transcription factor that activates genes required for degradation of extracellular protein and uptake of peptides such as the secreted aspartyl protease SAP2 or the oligopeptide transporter OPT1. Required for virulence. Synthesized as latent cytoplasmic precursor, which, upon a signal initiated by the plasma membrane SPS amino acid sensor system (including CSY1 and CSH3), becomes proteolytically activated and relocates to the nucleus, where it induces the expression of SPS-sensor-regulated genes. The chain is Transcriptional regulator STP3 (STP3) from Candida albicans (strain SC5314 / ATCC MYA-2876) (Yeast).